A 185-amino-acid chain; its full sequence is Ribosome-recycling factor (185 aa).

It belongs to the RRF family.

The protein localises to the cytoplasm. Its function is as follows. Responsible for the release of ribosomes from messenger RNA at the termination of protein biosynthesis. May increase the efficiency of translation by recycling ribosomes from one round of translation to another. In Geobacillus thermodenitrificans (strain NG80-2), this protein is Ribosome-recycling factor.